The sequence spans 82 residues: Translational regulator CsrA (82 aa).

It belongs to the CsrA/RsmA family. In terms of assembly, homodimer; the beta-strands of each monomer intercalate to form a hydrophobic core, while the alpha-helices form wings that extend away from the core.

Its subcellular location is the cytoplasm. A translational regulator that binds mRNA to regulate translation initiation and/or mRNA stability. Usually binds in the 5'-UTR at or near the Shine-Dalgarno sequence preventing ribosome-binding, thus repressing translation. Its main target seems to be the major flagellin gene, while its function is anatagonized by FliW. The protein is Translational regulator CsrA of Geobacillus kaustophilus (strain HTA426).